Consider the following 410-residue polypeptide: Peptide chain release factor subunit 1 (410 aa).

This sequence belongs to the eukaryotic release factor 1 family. In terms of assembly, heterodimer of two subunits, one of which binds GTP.

It is found in the cytoplasm. Functionally, directs the termination of nascent peptide synthesis (translation) in response to the termination codons UAA, UAG and UGA. In Picrophilus torridus (strain ATCC 700027 / DSM 9790 / JCM 10055 / NBRC 100828 / KAW 2/3), this protein is Peptide chain release factor subunit 1.